The sequence spans 729 residues: Phosphoribosylformylglycinamidine synthase subunit PurL (729 aa).

Residue H54 is part of the active site. Positions 57 and 96 each coordinate ATP. A Mg(2+)-binding site is contributed by E98. Substrate contacts are provided by residues S99–H102 and R121. Catalysis depends on H100, which acts as the Proton acceptor. D122 lines the Mg(2+) pocket. Q245 is a substrate binding site. D273 serves as a coordination point for Mg(2+). Substrate is bound at residue E317–Q319. The ATP site is built by D495 and G532. N533 serves as a coordination point for Mg(2+). S535 serves as a coordination point for substrate.

This sequence belongs to the FGAMS family. As to quaternary structure, monomer. Part of the FGAM synthase complex composed of 1 PurL, 1 PurQ and 2 PurS subunits.

It localises to the cytoplasm. It carries out the reaction N(2)-formyl-N(1)-(5-phospho-beta-D-ribosyl)glycinamide + L-glutamine + ATP + H2O = 2-formamido-N(1)-(5-O-phospho-beta-D-ribosyl)acetamidine + L-glutamate + ADP + phosphate + H(+). It participates in purine metabolism; IMP biosynthesis via de novo pathway; 5-amino-1-(5-phospho-D-ribosyl)imidazole from N(2)-formyl-N(1)-(5-phospho-D-ribosyl)glycinamide: step 1/2. Part of the phosphoribosylformylglycinamidine synthase complex involved in the purines biosynthetic pathway. Catalyzes the ATP-dependent conversion of formylglycinamide ribonucleotide (FGAR) and glutamine to yield formylglycinamidine ribonucleotide (FGAM) and glutamate. The FGAM synthase complex is composed of three subunits. PurQ produces an ammonia molecule by converting glutamine to glutamate. PurL transfers the ammonia molecule to FGAR to form FGAM in an ATP-dependent manner. PurS interacts with PurQ and PurL and is thought to assist in the transfer of the ammonia molecule from PurQ to PurL. This chain is Phosphoribosylformylglycinamidine synthase subunit PurL, found in Staphylococcus epidermidis (strain ATCC 12228 / FDA PCI 1200).